The chain runs to 76 residues: uncharacterized protein (76 aa).

3 helical membrane-spanning segments follow: residues 2–22 (LKVA…YSLF), 28–48 (LLIV…VEAI), and 56–76 (EYLL…KFII).

It localises to the cell membrane. This is an uncharacterized protein from Bacillus subtilis (strain 168).